Here is a 124-residue protein sequence, read N- to C-terminus: Conotoxin Im14.2 (124 aa).

The first 20 residues, 1-20 (MARFLSILLCFAMATGLAAG), serve as a signal peptide directing secretion. Residues 21 to 99 (IRYPDRVLGR…AENPVRDPKK (79 aa)) constitute a propeptide that is removed on maturation.

Post-translationally, contain 2 disulfide bonds. Expressed by the venom duct.

The protein resides in the secreted. In terms of biological role, probable neurotoxin. This chain is Conotoxin Im14.2, found in Conus imperialis (Imperial cone).